The sequence spans 1740 residues: DNA polymerase (1740 aa).

The interval 472-491 (IEMPHNQEDSDSEKEDEDTD) is disordered. Acidic residues predominate over residues 480–491 (DSDSEKEDEDTD). The region spanning 1189-1334 (VWGFFMGDGS…LFYLLKSLGY (146 aa)) is the DOD-type homing endonuclease domain. The interval 1673 to 1701 (PKESGSKTAKKPYQSQKLQKTKSSNKSQI) is disordered. Residues 1685-1700 (YQSQKLQKTKSSNKSQ) show a composition bias toward polar residues.

This sequence belongs to the DNA polymerase type-B family. Post-translationally, this protein undergoes a protein self splicing that involves a post-translational excision of the intervening region (intein) followed by peptide ligation.

The catalysed reaction is DNA(n) + a 2'-deoxyribonucleoside 5'-triphosphate = DNA(n+1) + diphosphate. In Acanthamoeba polyphaga (Amoeba), this protein is DNA polymerase (POLB).